A 351-amino-acid chain; its full sequence is Heme A synthase (351 aa).

Helical transmembrane passes span 17–37, 103–123, 129–149, 164–184, 201–221, 261–281, 289–309, and 316–336; these read WLIL…ATRL, LIGL…WLGQ, LVGL…MVSS, LMTH…LWLD, AMAL…VAGL, FNHR…AWAF, EFAF…LTLV, and LALV…YTVW. A heme-binding site is contributed by His-263. His-320 serves as a coordination point for heme.

It belongs to the COX15/CtaA family. Type 2 subfamily. Interacts with CtaB. It depends on heme b as a cofactor.

It is found in the cell membrane. It carries out the reaction Fe(II)-heme o + 2 A + H2O = Fe(II)-heme a + 2 AH2. It functions in the pathway porphyrin-containing compound metabolism; heme A biosynthesis; heme A from heme O: step 1/1. Catalyzes the conversion of heme O to heme A by two successive hydroxylations of the methyl group at C8. The first hydroxylation forms heme I, the second hydroxylation results in an unstable dihydroxymethyl group, which spontaneously dehydrates, resulting in the formyl group of heme A. The sequence is that of Heme A synthase from Hyphomonas neptunium (strain ATCC 15444).